A 316-amino-acid polypeptide reads, in one-letter code: Transaldolase A (316 aa).

Lys-131 functions as the Schiff-base intermediate with substrate in the catalytic mechanism.

Belongs to the transaldolase family. Type 1 subfamily. In terms of assembly, homodimer.

It is found in the cytoplasm. The enzyme catalyses D-sedoheptulose 7-phosphate + D-glyceraldehyde 3-phosphate = D-erythrose 4-phosphate + beta-D-fructose 6-phosphate. Its pathway is carbohydrate degradation; pentose phosphate pathway; D-glyceraldehyde 3-phosphate and beta-D-fructose 6-phosphate from D-ribose 5-phosphate and D-xylulose 5-phosphate (non-oxidative stage): step 2/3. In terms of biological role, transaldolase is important for the balance of metabolites in the pentose-phosphate pathway. The sequence is that of Transaldolase A (talA) from Escherichia coli O157:H7.